We begin with the raw amino-acid sequence, 328 residues long: Reticulocalbin-3 (328 aa).

Positions 1–20 (MMWRWSFLLLLLLLRHWALG) are cleaved as a signal peptide. Residues 24 to 48 (PDAGPHGQDRVHHGTPLSEAPHDDA) are disordered. EF-hand domains are found at residues 77-112 (QARLGRIVDRMDLAGDSDGWVSLAELRAWIAHTQQR), 113-148 (HIRDSVSAAWHTYDTDRDGRVGWEELRNATYGHYEP), 163-198 (KMLARDERRFRVADQDGDSMATREELTAFLHPEEFP), 200-235 (MRDIVVAETLEDLDKNKDGYVQVEEYIADLYSEEPG), 241-276 (WVQTERQQFREFRDLNKDGRLDGSEVGYWVLPPSQD), and 277-312 (QPLVEANHLLHESDTDKDGRLSKAEILSNWNMFVGS). Residues aspartate 92, aspartate 94, tryptophan 96, glutamate 101, aspartate 126, aspartate 128, aspartate 130, arginine 132, and glutamate 137 each contribute to the Ca(2+) site. Asparagine 140 is a glycosylation site (N-linked (GlcNAc...) asparagine). Aspartate 176, aspartate 178, aspartate 180, methionine 182, glutamate 187, aspartate 213, asparagine 215, aspartate 217, tyrosine 219, glutamate 224, aspartate 254, asparagine 256, aspartate 258, arginine 260, glutamate 265, aspartate 290, aspartate 292, aspartate 294, arginine 296, and glutamate 301 together coordinate Ca(2+). The Prevents secretion from ER motif lies at 325 to 328 (HDEL).

Belongs to the CREC family. As to quaternary structure, interacts with PCSK6 (immature form including the propeptide); probably involved in the maturation and the secretion of PCSK6. Degraded by PCSK6 and other endoproteases including FURIN and PCSK5. In terms of processing, N-glycosylated. As to expression, highly expressed in lung and heart. Also detected in liver, spleen, kidney, skeletal muscle, intestine, stomach, and brain.

It localises to the endoplasmic reticulum lumen. Functionally, probable molecular chaperone assisting protein biosynthesis and transport in the endoplasmic reticulum. Required for the proper biosynthesis and transport of pulmonary surfactant-associated protein A/SP-A, pulmonary surfactant-associated protein D/SP-D and the lipid transporter ABCA3. By regulating both the proper expression and the degradation through the endoplasmic reticulum-associated protein degradation pathway of these proteins plays a crucial role in pulmonary surfactant homeostasis. Has an anti-fibrotic activity by negatively regulating the secretion of type I and type III collagens. This calcium-binding protein also transiently associates with immature PCSK6 and regulates its secretion. The chain is Reticulocalbin-3 from Mus musculus (Mouse).